Reading from the N-terminus, the 190-residue chain is Shikimate kinase (190 aa).

Residue 13 to 18 (GAGKTT) coordinates ATP. A Mg(2+)-binding site is contributed by threonine 17. Positions 35, 59, and 81 each coordinate substrate. Arginine 119 is a binding site for ATP. Arginine 138 serves as a coordination point for substrate.

The protein belongs to the shikimate kinase family. In terms of assembly, monomer. It depends on Mg(2+) as a cofactor.

The protein localises to the cytoplasm. It carries out the reaction shikimate + ATP = 3-phosphoshikimate + ADP + H(+). The protein operates within metabolic intermediate biosynthesis; chorismate biosynthesis; chorismate from D-erythrose 4-phosphate and phosphoenolpyruvate: step 5/7. Catalyzes the specific phosphorylation of the 3-hydroxyl group of shikimic acid using ATP as a cosubstrate. This is Shikimate kinase from Ralstonia nicotianae (strain ATCC BAA-1114 / GMI1000) (Ralstonia solanacearum).